Here is a 353-residue protein sequence, read N- to C-terminus: Small ribosomal subunit biogenesis GTPase RsgA (353 aa).

Residues 1–17 (MSKNKLSKGQQRRVNAN) show a composition bias toward polar residues. The disordered stretch occupies residues 1-25 (MSKNKLSKGQQRRVNANHQRRLKTT). The CP-type G domain occupies 104–274 (ASVLTRPDFY…VIDSPGVREF (171 aa)). Residues 160-163 (NKID) and 214-222 (GQSGVGKSS) contribute to the GTP site. The Zn(2+) site is built by C298, C303, H305, and C311.

Belongs to the TRAFAC class YlqF/YawG GTPase family. RsgA subfamily. As to quaternary structure, monomer. Associates with 30S ribosomal subunit, binds 16S rRNA. It depends on Zn(2+) as a cofactor.

It localises to the cytoplasm. In terms of biological role, one of several proteins that assist in the late maturation steps of the functional core of the 30S ribosomal subunit. Helps release RbfA from mature subunits. May play a role in the assembly of ribosomal proteins into the subunit. Circularly permuted GTPase that catalyzes slow GTP hydrolysis, GTPase activity is stimulated by the 30S ribosomal subunit. The chain is Small ribosomal subunit biogenesis GTPase RsgA from Klebsiella pneumoniae (strain 342).